Consider the following 348-residue polypeptide: Bombesin receptor-activated protein C6orf89 homolog (348 aa).

At 1 to 58 the chain is on the cytoplasmic side; the sequence is MDLAANEISIYDKLSETVDLVRQTGHQCGMSEKAIEKFIRQLLEKNEPQRGPPQYPLL. Residues 59 to 79 traverse the membrane as a helical segment; it reads IAMYKVLLTLGLILFTAYFVI. Topologically, residues 80–348 are extracellular; the sequence is QPFSSLAPEP…ICDGTTLSEL (269 aa).

As to quaternary structure, homodimer. Interacts with BRS3. Interacts (via N-terminus) with SIN3B. In terms of processing, glycosylated.

It is found in the golgi apparatus membrane. Its subcellular location is the cytoplasm. Its function is as follows. Exhibits histone deacetylase (HDAC) enhancer properties. May play a role in cell cycle progression and wound repair of bronchial epithelial cells. The sequence is that of Bombesin receptor-activated protein C6orf89 homolog from Rattus norvegicus (Rat).